Consider the following 817-residue polypeptide: Lon protease (817 aa).

One can recognise a Lon N-terminal domain in the interval 22–216 (VPIMPLSDGV…KVTRQLNHQL (195 aa)). 368–375 (GPPGTGKT) contributes to the ATP binding site. Positions 604–785 (ALTPGVVMGL…GDVLELALNG (182 aa)) constitute a Lon proteolytic domain. Residues Ser-691 and Lys-734 contribute to the active site. Residues 784–817 (NGNGATKKKKKTPAKSKKSTKPAAKKTAARKSRK) are disordered. Residues 789-817 (TKKKKKTPAKSKKSTKPAAKKTAARKSRK) are compositionally biased toward basic residues.

Belongs to the peptidase S16 family. Homohexamer. Organized in a ring with a central cavity.

It is found in the cytoplasm. It carries out the reaction Hydrolysis of proteins in presence of ATP.. Functionally, ATP-dependent serine protease that mediates the selective degradation of mutant and abnormal proteins as well as certain short-lived regulatory proteins. Required for cellular homeostasis and for survival from DNA damage and developmental changes induced by stress. Degrades polypeptides processively to yield small peptide fragments that are 5 to 10 amino acids long. Binds to DNA in a double-stranded, site-specific manner. This chain is Lon protease, found in Desulfosudis oleivorans (strain DSM 6200 / JCM 39069 / Hxd3) (Desulfococcus oleovorans).